Here is a 444-residue protein sequence, read N- to C-terminus: Putative F-box protein At1g64540 (444 aa).

The 47-residue stretch at 4 to 50 (REFISNLPDEILGKILSLLPTKLGVSTSVLSKRWRNLILLVDNFDLE) folds into the F-box domain.

The polypeptide is Putative F-box protein At1g64540 (Arabidopsis thaliana (Mouse-ear cress)).